Here is a 389-residue protein sequence, read N- to C-terminus: Chalcone synthase 3 (389 aa).

Residue C164 is part of the active site.

Belongs to the thiolase-like superfamily. Chalcone/stilbene synthases family.

The catalysed reaction is (E)-4-coumaroyl-CoA + 3 malonyl-CoA + 3 H(+) = 2',4,4',6'-tetrahydroxychalcone + 3 CO2 + 4 CoA. The protein operates within secondary metabolite biosynthesis; flavonoid biosynthesis. The primary product of this enzyme is 4,2',4',6'-tetrahydroxychalcone (also termed naringenin-chalcone or chalcone) which can under specific conditions spontaneously isomerize into naringenin. The protein is Chalcone synthase 3 (CHS3) of Pisum sativum (Garden pea).